The sequence spans 817 residues: MSIREVIMDYLENSSKKALSVEELSVALHMNKAKDYKVFVKTLASLEAEHLLNFTAKGKVELAEKEEAKVVISGIFRANAAGFGFVSIDAEEPDVFVARGQTAFALDGDEVFIEIDKNANALKGTSAEGHVVEIIRHDVHQVVGTFVALNDDEKEQTGLIGFVKSRNKKIPYRVYLENEGLIPENKAIVRVEITHYPDKEFPQTMQGLVTEIIGQADDQGIDVLEVLASMDIVSEFPKEVLDQAEAVPEEVPENEIVGRVDYRNEITFTIDGADAKDLDDAVHAKRLENGNYELGVHIADVSHYVTENSPLDKEAYERGTSVYVTDRVVPMLPERLSNGICSLNPRINRLTQSCVMEISPEGRVINYQISQSIIKTTERMTYDAVNQMIAGDEAALENYAKIADSVKIMVELHHILEAMRKRRGAIDFDTVEAKIIVNEKGLPIEIRKRTRGIAERMIESFMLEANETVATHFEAHGLPFIYRIHEQPKADRLQRFIDFAATFGMQIEGTSNGIDQKVLQAFMKKIKGQPGEMVLSTMLLRSMQQARYSENNEGHFGLAAENYTHFTSPIRRYPDLLVHRLIREIGEGKTPANILQKWEDKIPEIAEHSSHRERRAVDAEREVEKMKKAEFMEEHVGEEYEGIIASVTRFGMFIELENTIEGLVHISTLKGDYFNYQERMLALIGERSGLTFKIGQPIKIKVVKADRMTGEIDFEYLPSELDLIDKAAKAKKKPDHKGRKKSNQSLKVKSVAPKSTDKSANKSKNGRRADEKFEFDKKKKKSAKKPFYSKAAKGKFTDKKDNGKKFTDGRKKPHKRG.

Residues 259 to 584 (RVDYRNEITF…DLLVHRLIRE (326 aa)) form the RNB domain. The 81-residue stretch at 637–717 (GEEYEGIIAS…MTGEIDFEYL (81 aa)) folds into the S1 motif domain. The segment at 728–817 (AKAKKKPDHK…DGRKKPHKRG (90 aa)) is disordered. Residues 729 to 742 (KAKKKPDHKGRKKS) show a composition bias toward basic residues. Composition is skewed to basic and acidic residues over residues 767 to 777 (RRADEKFEFDK) and 795 to 810 (KFTD…TDGR).

This sequence belongs to the RNR ribonuclease family. RNase R subfamily.

The protein localises to the cytoplasm. The enzyme catalyses Exonucleolytic cleavage in the 3'- to 5'-direction to yield nucleoside 5'-phosphates.. 3'-5' exoribonuclease that releases 5'-nucleoside monophosphates and is involved in maturation of structured RNAs. This is Ribonuclease R 1 (rnr1) from Lactococcus lactis subsp. lactis (strain IL1403) (Streptococcus lactis).